Reading from the N-terminus, the 156-residue chain is Crossover junction endodeoxyribonuclease RuvC (156 aa).

Residues D9, E69, and D141 contribute to the active site. 3 residues coordinate Mg(2+): D9, E69, and D141.

It belongs to the RuvC family. In terms of assembly, homodimer which binds Holliday junction (HJ) DNA. The HJ becomes 2-fold symmetrical on binding to RuvC with unstacked arms; it has a different conformation from HJ DNA in complex with RuvA. In the full resolvosome a probable DNA-RuvA(4)-RuvB(12)-RuvC(2) complex forms which resolves the HJ. Requires Mg(2+) as cofactor.

Its subcellular location is the cytoplasm. The enzyme catalyses Endonucleolytic cleavage at a junction such as a reciprocal single-stranded crossover between two homologous DNA duplexes (Holliday junction).. Functionally, the RuvA-RuvB-RuvC complex processes Holliday junction (HJ) DNA during genetic recombination and DNA repair. Endonuclease that resolves HJ intermediates. Cleaves cruciform DNA by making single-stranded nicks across the HJ at symmetrical positions within the homologous arms, yielding a 5'-phosphate and a 3'-hydroxyl group; requires a central core of homology in the junction. The consensus cleavage sequence is 5'-(A/T)TT(C/G)-3'. Cleavage occurs on the 3'-side of the TT dinucleotide at the point of strand exchange. HJ branch migration catalyzed by RuvA-RuvB allows RuvC to scan DNA until it finds its consensus sequence, where it cleaves and resolves the cruciform DNA. The protein is Crossover junction endodeoxyribonuclease RuvC of Acaryochloris marina (strain MBIC 11017).